The following is a 249-amino-acid chain: Derlin-2.2 (249 aa).

Topologically, residues 1-21 (MAQAVEEWYRQMPIITRSYLT) are cytoplasmic. Residues 22–42 (AAVVTTVGCTLEIISPYHLYL) traverse the membrane as a helical segment. Topologically, residues 43–96 (NPKLVVQHYEIWRLVTNFLYFRKMDLDFLFHMFFLARYCKLLEENSFRGRTADF) are lumenal. Residues 97 to 117 (FYMLLFGATVLTGIVLIGGMI) traverse the membrane as a helical segment. Residues 118-122 (PYISE) lie on the Cytoplasmic side of the membrane. The helical transmembrane segment at 123-143 (TFARILFLSNSLTFMMVYVWS) threads the bilayer. Topologically, residues 144-152 (KHNPFIHMS) are lumenal. Residues 153 to 173 (FLGLFTFTAAYLPWVLLGFSI) form a helical membrane-spanning segment. Residues 174-249 (LVGSSTWVDL…GAIGVDPQAQ (76 aa)) are Cytoplasmic-facing.

This sequence belongs to the derlin family. As to expression, expressed in roots, stalks, leaves, immature ears, embryo and endosperm.

The protein resides in the endoplasmic reticulum membrane. In terms of biological role, may be involved in the degradation process of specific misfolded endoplasmic reticulum (ER) luminal proteins. This is Derlin-2.2 (DER2.2) from Zea mays (Maize).